Consider the following 70-residue polypeptide: Insulin (70 aa).

Disulfide bonds link Cys-7/Cys-56, Cys-19/Cys-69, and Cys-55/Cys-60. Positions 33–49 (FVDSLAGYSKHQNGGIS) are cleaved as a propeptide — c peptide.

This sequence belongs to the insulin family. In terms of assembly, heterodimer of a B chain and an A chain linked by two disulfide bonds.

Its subcellular location is the secreted. Functionally, insulin decreases blood glucose concentration. It increases cell permeability to monosaccharides, amino acids and fatty acids. It accelerates glycolysis, the pentose phosphate cycle, and glycogen synthesis in liver. This Torpedo marmorata (Marbled electric ray) protein is Insulin (ins).